The chain runs to 154 residues: MFTQANLFLLLLLAIALVAKNQSLLFAVGFLIVIKAVGLDQKLFPVIQSKGINWGVTVITIAVLVPIATGDIGFKQLGEAMKSYYAWIALGAGIAVALIAKNGLTLLENDPHITTALVIGTILAVALFGGVAVGPLIGAGIAYLAMQIVKIFTS.

The next 4 membrane-spanning stretches (helical) occupy residues 14-34 (AIAL…LIVI), 54-74 (WGVT…DIGF), 87-107 (WIAL…LTLL), and 117-137 (LVIG…GPLI).

The protein belongs to the UPF0756 family.

It localises to the cell membrane. This Bacillus velezensis (strain DSM 23117 / BGSC 10A6 / LMG 26770 / FZB42) (Bacillus amyloliquefaciens subsp. plantarum) protein is UPF0756 membrane protein RBAM_026200.